Consider the following 333-residue polypeptide: Glycerol-3-phosphate dehydrogenase [NAD(P)+] (333 aa).

NADPH-binding residues include Ser-10, Trp-11, His-31, Arg-32, and Lys-105. Sn-glycerol 3-phosphate is bound by residues Lys-105, Gly-136, and Ser-138. Ala-140 contributes to the NADPH binding site. Sn-glycerol 3-phosphate-binding residues include Lys-191, Asp-244, Ser-254, Arg-255, and Asn-256. Residue Lys-191 is the Proton acceptor of the active site. Residue Arg-255 participates in NADPH binding. Residues Ile-279 and Glu-281 each coordinate NADPH.

It belongs to the NAD-dependent glycerol-3-phosphate dehydrogenase family.

It is found in the cytoplasm. The catalysed reaction is sn-glycerol 3-phosphate + NAD(+) = dihydroxyacetone phosphate + NADH + H(+). The enzyme catalyses sn-glycerol 3-phosphate + NADP(+) = dihydroxyacetone phosphate + NADPH + H(+). It functions in the pathway membrane lipid metabolism; glycerophospholipid metabolism. Its function is as follows. Catalyzes the reduction of the glycolytic intermediate dihydroxyacetone phosphate (DHAP) to sn-glycerol 3-phosphate (G3P), the key precursor for phospholipid synthesis. The sequence is that of Glycerol-3-phosphate dehydrogenase [NAD(P)+] from Pelodictyon phaeoclathratiforme (strain DSM 5477 / BU-1).